We begin with the raw amino-acid sequence, 217 residues long: Pyrophosphatase PpaX (217 aa).

The active-site Nucleophile is aspartate 11.

This sequence belongs to the HAD-like hydrolase superfamily. PpaX family. The cofactor is Mg(2+).

It catalyses the reaction diphosphate + H2O = 2 phosphate + H(+). Its function is as follows. Hydrolyzes pyrophosphate formed during P-Ser-HPr dephosphorylation by HPrK/P. Might play a role in controlling the intracellular pyrophosphate pool. The polypeptide is Pyrophosphatase PpaX (Listeria welshimeri serovar 6b (strain ATCC 35897 / DSM 20650 / CCUG 15529 / CIP 8149 / NCTC 11857 / SLCC 5334 / V8)).